The sequence spans 249 residues: MIT domain-containing protein 1 (249 aa).

One can recognise an MIT domain in the interval 8–86 (QDPQSTAAAT…KYLDQEKEDG (79 aa)). The interval 168–231 (RGLQEIEESL…SLGYCDFDLR (64 aa)) is important for association with membranes.

In terms of assembly, homodimer. Interacts (via MIT domain) with CHMP1A, CHMP1B, CHMP2A and IST1.

It localises to the late endosome membrane. The protein localises to the midbody. It is found in the membrane. Required for efficient abscission at the end of cytokinesis, together with components of the ESCRT-III complex. The sequence is that of MIT domain-containing protein 1 (MITD1) from Homo sapiens (Human).